The primary structure comprises 2207 residues: Genome polyprotein (2207 aa).

Residue Gly-2 is the site of N-myristoyl glycine; by host attachment. The Cytoplasmic segment spans residues 2 to 1518 (GAQVSSQKVG…NINRAMTILQ (1517 aa)). The tract at residues 579–599 (GLGDLIEGVVEGVTRNALTPL) is amphipathic alpha-helix. Polar residues predominate over residues 597 to 613 (TPLTPANNLPDTQSSGP). 2 disordered regions span residues 597 to 620 (TPLTPANNLPDTQSSGPAHSKETP) and 628 to 647 (GATNPLVPSDTVQTRHVIQK). Active-site for protease 2A activity residues include His-899 and Asp-917. Residues Cys-934 and Cys-936 each contribute to the Zn(2+) site. Residue Cys-988 is the For protease 2A activity of the active site. Positions 994 and 996 each coordinate Zn(2+). Positions 1126 to 1198 (GDSWLKKFTE…HQSCPSQEHQ (73 aa)) are membrane-binding. Positions 1126 to 1264 (GDSWLKKFTE…SPGTGKSVAT (139 aa)) are oligomerization. The tract at residues 1147–1151 (SNKIS) is RNA-binding. The SF3 helicase domain maps to 1230–1386 (EHTINNYVQF…SEYSRDGKLN (157 aa)). 1254 to 1261 (GSPGTGKS) lines the ATP pocket. Residues Cys-1394, Cys-1397, Cys-1406, and Cys-1411 each coordinate Zn(2+). The C4-type zinc-finger motif lies at 1394 to 1411 (CKNCHHPANFKRCCPLVC). Residues 1438–1445 (ERNRRSSI) form an RNA-binding region. The oligomerization stretch occupies residues 1449-1454 (MEALFQ). The stretch at 1519–1534 (AVTTFAAVAGVVYVMY) is an intramembrane region. Residues 1535 to 2207 (KLFAGHQGAY…TLYRRWLDSF (673 aa)) are Cytoplasmic-facing. Tyr-1544 is modified (O-(5'-phospho-RNA)-tyrosine). Residues 1564–1742 (GPGFDYAVAM…FAAALKRSYF (179 aa)) form the Peptidase C3 domain. Residues His-1603, Glu-1634, and Cys-1710 each act as for protease 3C activity in the active site. The RdRp catalytic domain occupies 1973-2088 (EKLFAFDYTG…SYPHEVDASL (116 aa)). 2 residues coordinate Mg(2+): Asp-1979 and Asp-2074.

Belongs to the picornaviruses polyprotein family. Interacts with capsid protein VP1 and capsid protein VP3 to form heterotrimeric protomers. As to quaternary structure, interacts with capsid protein VP0, and capsid protein VP3 to form heterotrimeric protomers. Interacts with human PVR. Five protomers subsequently associate to form pentamers which serve as building blocks for the capsid. Interacts with capsid protein VP2, capsid protein VP3 and capsid protein VP4 following cleavage of capsid protein VP0. In terms of assembly, interacts with capsid protein VP1 and capsid protein VP3 in the mature capsid. Interacts with capsid protein VP0 and capsid protein VP1 to form heterotrimeric protomers. Five protomers subsequently associate to form pentamers which serve as building blocks for the capsid. Interacts with capsid protein VP4 in the mature capsid. Interacts with protein 2C; this interaction may be important for virion morphogenesis. As to quaternary structure, interacts with capsid protein VP1 and capsid protein VP3. In terms of assembly, homodimer. Homohexamer; forms a hexameric ring structure with 6-fold symmetry characteristic of AAA+ ATPases. Interacts (via N-terminus) with host RTN3 (via reticulon domain); this interaction is important for viral replication. Interacts with capsid protein VP3; this interaction may be important for virion morphogenesis. As to quaternary structure, interacts with protein 3CD. In terms of assembly, homodimer. Interacts with host GBF1. Interacts (via GOLD domain) with host ACBD3 (via GOLD domain); this interaction allows the formation of a viral protein 3A/ACBD3 heterotetramer with a 2:2 stoichiometry, which will stimulate the recruitment of host PI4KB in order to synthesize PI4P at the viral RNA replication sites. Interacts with RNA-directed RNA polymerase. As to quaternary structure, interacts with protein 3AB and with RNA-directed RNA polymerase. In terms of assembly, interacts with Viral protein genome-linked and with protein 3CD. It depends on Mg(2+) as a cofactor. In terms of processing, specific enzymatic cleavages in vivo by the viral proteases yield processing intermediates and the mature proteins. Myristoylation is required for the formation of pentamers during virus assembly. Further assembly of 12 pentamers and a molecule of genomic RNA generates the provirion. Post-translationally, during virion maturation, immature virions are rendered infectious following cleavage of VP0 into VP4 and VP2. This maturation seems to be an autocatalytic event triggered by the presence of RNA in the capsid and it is followed by a conformational change infectious virion. In terms of processing, myristoylation is required during RNA encapsidation and formation of the mature virus particle. VPg is uridylylated by the polymerase into VPg-pUpU. This acts as a nucleotide-peptide primer for the genomic RNA replication.

It is found in the virion. The protein resides in the host cytoplasm. It localises to the host cytoplasmic vesicle membrane. The protein localises to the host nucleus. It carries out the reaction a ribonucleoside 5'-triphosphate + H2O = a ribonucleoside 5'-diphosphate + phosphate + H(+). The catalysed reaction is Selective cleavage of Tyr-|-Gly bond in the picornavirus polyprotein.. It catalyses the reaction RNA(n) + a ribonucleoside 5'-triphosphate = RNA(n+1) + diphosphate. The enzyme catalyses Selective cleavage of Gln-|-Gly bond in the poliovirus polyprotein. In other picornavirus reactions Glu may be substituted for Gln, and Ser or Thr for Gly.. With respect to regulation, replication or transcription is subject to high level of random mutations by the nucleotide analog ribavirin. Functionally, forms an icosahedral capsid of pseudo T=3 symmetry with capsid proteins VP2 and VP3. The capsid is 300 Angstroms in diameter, composed of 60 copies of each capsid protein and enclosing the viral positive strand RNA genome. Capsid protein VP1 mainly forms the vertices of the capsid. Capsid protein VP1 interacts with host cell receptor PVR to provide virion attachment to target host cells. This attachment induces virion internalization predominantly through clathrin- and caveolin-independent endocytosis in Hela cells and through caveolin-mediated endocytosis in brain microvascular endothelial cells. Tyrosine kinases are probably involved in the entry process. Virus binding to PVR induces increased junctional permeability and rearrangement of junctional proteins. Modulation of endothelial tight junctions, as well as cytolytic infection of endothelial cells themselves, may result in loss of endothelial integrity which may help the virus to reach the CNS. After binding to its receptor, the capsid undergoes conformational changes. Capsid protein VP1 N-terminus (that contains an amphipathic alpha-helix) and capsid protein VP4 are externalized. Together, they shape a pore in the host membrane through which viral genome is translocated to host cell cytoplasm. In terms of biological role, forms an icosahedral capsid of pseudo T=3 symmetry with capsid proteins VP2 and VP3. The capsid is 300 Angstroms in diameter, composed of 60 copies of each capsid protein and enclosing the viral positive strand RNA genome. Its function is as follows. Lies on the inner surface of the capsid shell. After binding to the host receptor, the capsid undergoes conformational changes. Capsid protein VP4 is released, Capsid protein VP1 N-terminus is externalized, and together, they shape a pore in the host membrane through which the viral genome is translocated into the host cell cytoplasm. Component of immature procapsids, which is cleaved into capsid proteins VP4 and VP2 after maturation. Allows the capsid to remain inactive before the maturation step. Functionally, cysteine protease that cleaves viral polyprotein and specific host proteins. It is responsible for the autocatalytic cleavage between the P1 and P2 regions, which is the first cleavage occurring in the polyprotein. Also cleaves the host translation initiation factor EIF4G1, in order to shut down the capped cellular mRNA translation. Inhibits the host nucleus-cytoplasm protein and RNA trafficking by cleaving host members of the nuclear pores including NUP98, NUP62 and NUP153. Counteracts stress granule formation probably by antagonizing its assembly or promoting its dissassembly. Cleaves and inhibits host IFIH1/MDA5, thereby inhibiting the type-I IFN production and the establishment of the antiviral state. Cleaves and inhibits host MAVS, thereby inhibiting the type-I IFN production and the establishment of the antiviral state. In terms of biological role, plays an essential role in the virus replication cycle by acting as a viroporin. Creates a pore in the host endoplasmic reticulum and as a consequence releases Ca2+ in the cytoplasm of infected cell. In turn, high levels of cytoplasmic calcium may trigger membrane trafficking and transport of viral ER-associated proteins to viroplasms, sites of viral genome replication. Its function is as follows. Induces and associates with structural rearrangements of intracellular membranes. Displays RNA-binding, nucleotide binding and NTPase activities. May play a role in virion morphogenesis and viral RNA encapsidation by interacting with the capsid protein VP3. Localizes the viral replication complex to the surface of membranous vesicles. Together with protein 3CD binds the Cis-Active RNA Element (CRE) which is involved in RNA synthesis initiation. Acts as a cofactor to stimulate the activity of 3D polymerase, maybe through a nucleid acid chaperone activity. Functionally, localizes the viral replication complex to the surface of membranous vesicles. It inhibits host cell endoplasmic reticulum-to-Golgi apparatus transport and causes the disassembly of the Golgi complex, possibly through GBF1 interaction. This would result in depletion of MHC, trail receptors and IFN receptors at the host cell surface. Plays an essential role in viral RNA replication by recruiting ACBD3 and PI4KB at the viral replication sites, thereby allowing the formation of the rearranged membranous structures where viral replication takes place. In terms of biological role, acts as a primer for viral RNA replication and remains covalently bound to viral genomic RNA. VPg is uridylylated prior to priming replication into VPg-pUpU. The oriI viral genomic sequence may act as a template for this. The VPg-pUpU is then used as primer on the genomic RNA poly(A) by the RNA-dependent RNA polymerase to replicate the viral genome. During genome replication, the VPg-RNA linkage is removed by the host TDP2, thereby accelerating replication. During the late stage of the replication cycle, host TDP2 is excluded from sites of viral RNA synthesis and encapsidation, allowing for the generation of progeny virions. Its function is as follows. Involved in the viral replication complex and viral polypeptide maturation. It exhibits protease activity with a specificity and catalytic efficiency that is different from protease 3C. Protein 3CD lacks polymerase activity. Protein 3CD binds to the 5'UTR of the viral genome. Major viral protease that mediates proteolytic processing of the polyprotein. Cleaves host EIF5B, contributing to host translation shutoff. Also cleaves host PABPC1, contributing to host translation shutoff. Cleaves host RIGI and thus contributes to the inhibition of type I interferon production. Cleaves host NLRP1, triggers host N-glycine-mediated degradation of the autoinhibitory NLRP1 N-terminal fragment. Inhibits the integrated stress response (ISR) in the infected cell by cleaving host G3BP1. Stress granule formation is thus inhibited, which allows protein synthesis and viral replication. Functionally, replicates the viral genomic RNA on the surface of intracellular membranes. May form linear arrays of subunits that propagate along a strong head-to-tail interaction called interface-I. Covalently attaches UMP to a tyrosine of VPg, which is used to prime RNA synthesis. The positive stranded RNA genome is first replicated at virus induced membranous vesicles, creating a dsRNA genomic replication form. This dsRNA is then used as template to synthesize positive stranded RNA genomes. ss(+)RNA genomes are either translated, replicated or encapsidated. The sequence is that of Genome polyprotein from Homo sapiens (Human).